The following is a 66-amino-acid chain: Putative alpha-neurotoxin RjAa13 (66 aa).

The 60-residue stretch at 1–60 folds into the LCN-type CS-alpha/beta domain; that stretch reads KEGYPVDWGNCKYECMSDAYCKDLCVDRKAKSGYCYKLNWSCYCEGLPDDSPIKTNGHCR. Intrachain disulfides connect cysteine 11–cysteine 59, cysteine 15–cysteine 35, cysteine 21–cysteine 42, and cysteine 25–cysteine 44.

Belongs to the long (4 C-C) scorpion toxin superfamily. Sodium channel inhibitor family. Alpha subfamily. As to expression, expressed by the venom gland.

Its subcellular location is the secreted. Its function is as follows. Alpha toxins bind voltage-independently at site-3 of sodium channels (Nav) and inhibits the inactivation of the activated channels, thereby blocking neuronal transmission. The protein is Putative alpha-neurotoxin RjAa13 of Rhopalurus junceus (Caribbean blue scorpion).